The following is a 396-amino-acid chain: Stearoyl-[acyl-carrier-protein] 9-desaturase 2, chloroplastic (396 aa).

A chloroplast-targeting transit peptide spans 1 to 32; sequence MALRPNDVTLRLTPPLAAAARRNRRAAAGGVR. Residues Glu138, Glu176, His179, Glu229, Glu262, and His265 each coordinate Fe cation.

Belongs to the fatty acid desaturase type 2 family. Homodimer. Fe(2+) is required as a cofactor.

It localises to the plastid. The protein resides in the chloroplast. It carries out the reaction octadecanoyl-[ACP] + 2 reduced [2Fe-2S]-[ferredoxin] + O2 + 2 H(+) = (9Z)-octadecenoyl-[ACP] + 2 oxidized [2Fe-2S]-[ferredoxin] + 2 H2O. Its pathway is lipid metabolism; fatty acid metabolism. In terms of biological role, converts stearoyl-ACP to oleoyl-ACP by introduction of a cis double bond between carbons 9 and 10 of the acyl chain. Required for the repression of the salicylic acid (SA) signaling pathway. The protein is Stearoyl-[acyl-carrier-protein] 9-desaturase 2, chloroplastic (SSI2) of Oryza sativa subsp. indica (Rice).